A 418-amino-acid chain; its full sequence is UDP-N-acetylglucosamine 1-carboxyvinyltransferase (418 aa).

22–23 (KN) is a phosphoenolpyruvate binding site. Residue R92 coordinates UDP-N-acetyl-alpha-D-glucosamine. C116 serves as the catalytic Proton donor. The residue at position 116 (C116) is a 2-(S-cysteinyl)pyruvic acid O-phosphothioketal. Residues D306 and I328 each contribute to the UDP-N-acetyl-alpha-D-glucosamine site.

This sequence belongs to the EPSP synthase family. MurA subfamily.

The protein resides in the cytoplasm. It carries out the reaction phosphoenolpyruvate + UDP-N-acetyl-alpha-D-glucosamine = UDP-N-acetyl-3-O-(1-carboxyvinyl)-alpha-D-glucosamine + phosphate. The protein operates within cell wall biogenesis; peptidoglycan biosynthesis. Cell wall formation. Adds enolpyruvyl to UDP-N-acetylglucosamine. The sequence is that of UDP-N-acetylglucosamine 1-carboxyvinyltransferase from Solibacter usitatus (strain Ellin6076).